The chain runs to 167 residues: Small ribosomal subunit protein uS5 (167 aa).

One can recognise an S5 DRBM domain in the interval 12-75 (LQEKLIAVNR…EKARRNMTTI (64 aa)).

It belongs to the universal ribosomal protein uS5 family. In terms of assembly, part of the 30S ribosomal subunit. Contacts proteins S4 and S8.

In terms of biological role, with S4 and S12 plays an important role in translational accuracy. Functionally, located at the back of the 30S subunit body where it stabilizes the conformation of the head with respect to the body. This Vibrio parahaemolyticus serotype O3:K6 (strain RIMD 2210633) protein is Small ribosomal subunit protein uS5.